The primary structure comprises 252 residues: Probable transcriptional regulatory protein Fnod_1106 (252 aa).

It belongs to the TACO1 family.

It localises to the cytoplasm. This is Probable transcriptional regulatory protein Fnod_1106 from Fervidobacterium nodosum (strain ATCC 35602 / DSM 5306 / Rt17-B1).